A 219-amino-acid polypeptide reads, in one-letter code: MRRPGAVVRRAGGYVTNLMPSAAGEPSIGGGLGDQVYNRLLGERIIFLGQPVDDDIANKITAQLLLLASDPDKDIFLYINSPGGSITAGMAIYDTMQYIKNDVVTIAMGLAASMGQFLLSAGTPGKRFALPNAEILIHQPSAGLAGSASDIKIHAERLLHTKRRMAELTSQHTGQTIEQITRDSDRDRWFDAFEAKEYGLIDDVIATAAGMPGGGGTGA.

Serine 113 serves as the catalytic Nucleophile. The active site involves histidine 138.

It belongs to the peptidase S14 family. As to quaternary structure, fourteen ClpP subunits assemble into 2 heptameric rings which stack back to back to give a disk-like structure with a central cavity, resembling the structure of eukaryotic proteasomes.

The protein localises to the cytoplasm. It catalyses the reaction Hydrolysis of proteins to small peptides in the presence of ATP and magnesium. alpha-casein is the usual test substrate. In the absence of ATP, only oligopeptides shorter than five residues are hydrolyzed (such as succinyl-Leu-Tyr-|-NHMec, and Leu-Tyr-Leu-|-Tyr-Trp, in which cleavage of the -Tyr-|-Leu- and -Tyr-|-Trp bonds also occurs).. In terms of biological role, cleaves peptides in various proteins in a process that requires ATP hydrolysis. Has a chymotrypsin-like activity. Plays a major role in the degradation of misfolded proteins. Probably partially responsible for degradation of ECF sigma factor SigR prime. The polypeptide is ATP-dependent Clp protease proteolytic subunit 1 (Streptomyces coelicolor (strain ATCC BAA-471 / A3(2) / M145)).